The sequence spans 551 residues: uncharacterized protein (551 aa).

Over M1–V7 the chain is Cytoplasmic. A helical transmembrane segment spans residues V8–I28. At T29 to K88 the chain is on the vacuolar side. A helical transmembrane segment spans residues I89–M109. The Cytoplasmic portion of the chain corresponds to S110–T135. The chain crosses the membrane as a helical span at residues F136–Y156. At P157–T160 the chain is on the vacuolar side. Residues W161 to F181 traverse the membrane as a helical segment. Residues S182 to R551 lie on the Cytoplasmic side of the membrane. Phosphoserine is present on residues S224 and S232. The segment at A280–N341 is disordered. Residues T307–K320 show a composition bias toward polar residues. Over residues N321–N341 the composition is skewed to low complexity. Phosphoserine is present on S363.

Forms homo dimers or homooligomers in MCC microdomains. Interacts with BOI2 and RHO3, two key regulators of secretion.

Its subcellular location is the vacuole membrane. The protein localises to the cell membrane. Functionally, protein involved in secretion and cell wall organization. Contributes to cell surface-related functions as a auxiliary component of MCC/eisosome that specifically interacts with the secretory pathway. This is an uncharacterized protein from Saccharomyces cerevisiae (strain ATCC 204508 / S288c) (Baker's yeast).